The following is a 247-amino-acid chain: Probable transcriptional regulatory protein Syncc9605_2132 (247 aa).

It belongs to the TACO1 family.

Its subcellular location is the cytoplasm. The polypeptide is Probable transcriptional regulatory protein Syncc9605_2132 (Synechococcus sp. (strain CC9605)).